The primary structure comprises 264 residues: Phycocyanobilin:ferredoxin oxidoreductase (264 aa).

Belongs to the HY2 family.

The catalysed reaction is (2R,3Z)-phycocyanobilin + 4 oxidized [2Fe-2S]-[ferredoxin] = biliverdin IXalpha + 4 reduced [2Fe-2S]-[ferredoxin] + 4 H(+). Catalyzes the four-electron reduction of biliverdin IX-alpha (2-electron reduction at both the A and D rings); the reaction proceeds via an isolatable 2-electron intermediate, 181,182-dihydrobiliverdin. The polypeptide is Phycocyanobilin:ferredoxin oxidoreductase (Prochlorococcus marinus (strain MIT 9303)).